The chain runs to 102 residues: MYAIIETGGKQIKVVEGQEIYVEKVTADVNESVTFDKVLFIGGDDVKVGAPLIDGATVTAKVEKHGRQKKIDVHKFKPKKNYHRKQGHRQPYTKLVIDKINA.

The protein belongs to the bacterial ribosomal protein bL21 family. As to quaternary structure, part of the 50S ribosomal subunit. Contacts protein L20.

Functionally, this protein binds to 23S rRNA in the presence of protein L20. In Oceanobacillus iheyensis (strain DSM 14371 / CIP 107618 / JCM 11309 / KCTC 3954 / HTE831), this protein is Large ribosomal subunit protein bL21.